Reading from the N-terminus, the 55-residue chain is Large ribosomal subunit protein bL33 (55 aa).

It belongs to the bacterial ribosomal protein bL33 family.

The polypeptide is Large ribosomal subunit protein bL33 (Maricaulis maris (strain MCS10) (Caulobacter maris)).